We begin with the raw amino-acid sequence, 153 residues long: Large ribosomal subunit protein uL13 (153 aa).

A disordered region spans residues 134 to 153; sequence EAQQPQALDVGSLNRKNVSA.

This sequence belongs to the universal ribosomal protein uL13 family. Part of the 50S ribosomal subunit.

In terms of biological role, this protein is one of the early assembly proteins of the 50S ribosomal subunit, although it is not seen to bind rRNA by itself. It is important during the early stages of 50S assembly. The polypeptide is Large ribosomal subunit protein uL13 (Methylorubrum extorquens (strain CM4 / NCIMB 13688) (Methylobacterium extorquens)).